We begin with the raw amino-acid sequence, 122 residues long: Large ribosomal subunit protein uL14 (122 aa).

It belongs to the universal ribosomal protein uL14 family. Part of the 50S ribosomal subunit. Forms a cluster with proteins L3 and L19. In the 70S ribosome, L14 and L19 interact and together make contacts with the 16S rRNA in bridges B5 and B8.

Its function is as follows. Binds to 23S rRNA. Forms part of two intersubunit bridges in the 70S ribosome. The polypeptide is Large ribosomal subunit protein uL14 (Shewanella sp. (strain ANA-3)).